The chain runs to 345 residues: Dimethyladenosine transferase 1, mitochondrial (345 aa).

A mitochondrion-targeting transit peptide spans 1 to 27 (MAASGKLGTFRLPPLPTIREIIKLFGL). Residues 35 to 38 (QNFL), asparagine 36, leucine 38, glycine 63, glutamate 85, aspartate 111, and asparagine 141 contribute to the S-adenosyl-L-methionine site.

It belongs to the class I-like SAM-binding methyltransferase superfamily. rRNA adenine N(6)-methyltransferase family. KsgA subfamily. As to quaternary structure, interacts with mitochondrial RNA polymerase POLRMT. Interacts with TFAM.

Its subcellular location is the mitochondrion. Its function is as follows. S-adenosyl-L-methionine-dependent methyltransferase which specifically dimethylates mitochondrial 12S rRNA at the conserved stem loop. Also required for basal transcription of mitochondrial DNA, probably via its interaction with POLRMT and TFAM. Stimulates transcription independently of the methyltransferase activity. This is Dimethyladenosine transferase 1, mitochondrial (Tfb1m) from Rattus norvegicus (Rat).